A 248-amino-acid polypeptide reads, in one-letter code: MQTIALAVIGGTGVYTLSQFDDVQVYEVETLYGRPSGPIRVGMLFGQRVAFFARHGEEHALPPHKINYRANIAALQQLGVSRVLALNTVGGINEAFGPRTLVCPDQLIDYTWGRVSTFCEEVGSEVLHVDFGHPYSPLLRGCLLRAARDVDVSLVEYGCYGVTQGPRLETIAEIDRLRRDGCDLVGMTGMPEAALAREKGLEYACLGIVSNWAAGCGDGAEITMGEILSNVATAFSCLPELISKVARE.

Phosphate is bound by residues T12 and 54 to 55; that span reads RH. M187 is a binding site for substrate. Position 188 (T188) interacts with phosphate. 211–213 provides a ligand contact to substrate; it reads NWA.

It belongs to the PNP/MTAP phosphorylase family. MTAP subfamily. In terms of assembly, homotrimer.

The catalysed reaction is S-methyl-5'-thioinosine + phosphate = 5-(methylsulfanyl)-alpha-D-ribose 1-phosphate + hypoxanthine. Its pathway is purine metabolism; purine nucleoside salvage. Catalyzes the reversible phosphorylation of S-methyl-5'-thioinosine (MTI) to hypoxanthine and 5-methylthioribose-1-phosphate. Involved in the breakdown of S-methyl-5'-thioadenosine (MTA), a major by-product of polyamine biosynthesis. Catabolism of (MTA) occurs via deamination to MTI and phosphorolysis to hypoxanthine. The chain is Probable S-methyl-5'-thioinosine phosphorylase from Xylella fastidiosa (strain Temecula1 / ATCC 700964).